The following is a 180-amino-acid chain: Colicin-E5 (180 aa).

Disordered stretches follow at residues 24-143 and 155-180; these read AQTD…GSPG and VTQI…KNDQ. The segment covering 54–76 has biased composition (basic and acidic residues); it reads ESRKKKEDNKRDAEGKLNDELAK. The segment at 74-180 is nuclease; the sequence is LAKNKGKIPG…RIQWGNKNDQ (107 aa). The segment covering 106–116 has biased composition (polar residues); that stretch reads NTVSNGATGTS. The span at 160–171 shows a compositional bias: basic and acidic residues; sequence DKTDPGWVDDSR.

It belongs to the colicin/pyosin nuclease family.

Its function is as follows. Colicins are polypeptide toxins produced by and active against E.coli and closely related bacteria. This colicin is an endonuclease. In Escherichia coli, this protein is Colicin-E5 (col).